The sequence spans 1128 residues: MMPMFLTVYLSNSEQHFTEVPVTPETICRDVVDLCKEPGENDCHLAEVWCGSERPVADNERMFDVLQRFGSQRNEVRFFLRHERPPNRDIVSGPRSQDPSVKRNGVKVPGEHRRKENGVNSPRLDLTLAELQEMASRQQQQIEAQQQMLATKEQRLKFLKQQDQRQQQQAAEQEKLKRLREIAESQEAKLKKVRALKGHVEQKRLSNGKLVEEIEQMNSLFQQKQRELVLAVSKVEELTRQLEMLKNGRIDGHHDNQSAVAELDRLYKELQLRNKLNQEQNAKLQQQRECLNKRNSEVAVMDKRVSELRDRLWKKKAALQQKENLPVSPDGNLPQQAVSAPSRVAAVGPYIQSSTMPRMPSRPELLVKPALPDGSLLMQSAEGPMKIQTLPNMRSGAASQSKGSKAHPASPDWNPSNADLLPSQGSSVPQSAGTALDQVDDGEIAVREKEKKVRPFSMFDTVDQCAAPPSFGTLRKNQSSEDILRDAQAVNKNVAKVPPPVPTKPKQIHLPYFGQTAQSPSDMKPDGNAQQLPIAATSVGAKLKPAGPQARMLLSPGAPSGGQDQVLSPASKQESPPAAAVRPFTPQPSKDTFPPAFRKPQTVAASSIYSMYTQQQAPGKNFQQAVQSALTKTQPRGPHFSSVYGKPVIAAAQNPQQHPENIYSCSQGKPGSPEPETETVSSVHESHENERIPRPLSPTKLLPFLSNPYRNQSDADLEALRKKLSNAPRPLKKRSSITEPEGPNGPNIQKLLYQRTTIAAMETISVPSHPSKSPGSVTVNPESSVEIPNPYLHVEPEKEVGSLVPEPLSPEDMGSASTENSDVPAPSAGLEYVSEGVTDSSTNLQNNVEETNPEAPHLLEVYLEEYPPYPPPPYPSGEPEVSEEDSARMRPPEITGQVSLPPGKRTNLRKTGSERIAHGMRVKFNPLALLLDSSLEGEFDLVQRIIYEVDDPSLPNDEGITALHNAVCAGHTEIVKFLVQFGVNVNAADSDGWTPLHCAASCNNVQVCKFLVESGAAVFAMTYSDMQTAADKCEEMEEGYTQCSQFLYGVQEKMGIMNKGVIYALWDYEPQHDDELLMKEGDCMTVIRREDEEEIEWWWARLNDKEGYVPRNLLGLYPRIKPRQRSLA.

The segment at 85–120 (PPNRDIVSGPRSQDPSVKRNGVKVPGEHRRKENGVN) is disordered. Residues 332-348 (NLPQQAVSAPSRVAAVG) form an interaction with APPBP1 region. A disordered region spans residues 393-436 (MRSGAASQSKGSKAHPASPDWNPSNADLLPSQGSSVPQSAGTAL). Residues 413–433 (WNPSNADLLPSQGSSVPQSAG) show a composition bias toward polar residues. Phosphoserine occurs at positions 479, 555, 568, 571, and 575. Disordered regions lie at residues 549–596 (QARM…FPPA) and 654–705 (NPQQ…LPFL). Over residues 562 to 574 (GQDQVLSPASKQE) the composition is skewed to polar residues. The segment covering 654-669 (NPQQHPENIYSCSQGK) has biased composition (polar residues). A compositionally biased stretch (basic and acidic residues) spans 684–693 (HESHENERIP). Phosphoserine occurs at positions 697, 713, and 736. Disordered stretches follow at residues 723–748 (KLSN…GPNI), 802–824 (SLVP…SDVP), and 870–907 (PPPP…KRTN). Residues 866 to 875 (YPPYPPPPYP) carry the SH3-binding motif. The interval 876–1128 (SGEPEVSEED…RIKPRQRSLA (253 aa)) is mediates interaction with APC2. ANK repeat units follow at residues 958–987 (EGIT…NVNA) and 991–1020 (DGWT…AVFA). The SH3 domain occupies 1057–1119 (MNKGVIYALW…PRNLLGLYPR (63 aa)).

This sequence belongs to the ASPP family. As to quaternary structure, interacts with P53/TP53; the interaction promotes pro-apoptotic activity. Interacts with BCL2. Interacts with protein phosphatase 1. Interacts with RELA NF-kappa-B subunit. This interaction probably prevents the activation of apoptosis, possibly by preventing its interaction with p53/TP53. Interacts with APC2 and APPBP1. Interacts with DDX42 (via the C-terminus); the interaction is not inhibited by TP53BP2 ubiquitination and is independent of p53/TP53.

It localises to the cytoplasm. It is found in the perinuclear region. The protein localises to the nucleus. Its function is as follows. Regulator that plays a central role in regulation of apoptosis and cell growth via its interactions with proteins such as TP53. Regulates p53/TP53 by enhancing the DNA binding and transactivation function of p53/TP53 on the promoters of proapoptotic genes in vivo. Inhibits the ability of APPBP1 to conjugate NEDD8 to CUL1, and thereby decreases APPBP1 ability to induce apoptosis. Impedes cell cycle progression at G2/M. Its apoptosis-stimulating activity is inhibited by its interaction with DDX42. This chain is Apoptosis-stimulating of p53 protein 2 (Tp53bp2), found in Mus musculus (Mouse).